Consider the following 165-residue polypeptide: UPF0114 protein in repA1-repA2 intergenic region (165 aa).

Helical transmembrane passes span 15–35, 53–73, and 136–156; these read LMFPVYIGLAFGFVLLTVKFF, LVLIVLSLIDIALVGGLLVMV, and IMWCVVIHLTFVLSAFGMAYI.

This sequence belongs to the UPF0114 family.

It localises to the cell membrane. The polypeptide is UPF0114 protein in repA1-repA2 intergenic region (Buchnera aphidicola subsp. Thelaxes suberi).